The chain runs to 213 residues: Ribosomal RNA small subunit methyltransferase G (213 aa).

Residues Gly77, Phe82, 130 to 131, and Arg146 each bind S-adenosyl-L-methionine; that span reads IE.

This sequence belongs to the methyltransferase superfamily. RNA methyltransferase RsmG family.

Its subcellular location is the cytoplasm. It catalyses the reaction guanosine(527) in 16S rRNA + S-adenosyl-L-methionine = N(7)-methylguanosine(527) in 16S rRNA + S-adenosyl-L-homocysteine. Its function is as follows. Specifically methylates the N7 position of guanine in position 527 of 16S rRNA. In Bartonella tribocorum (strain CIP 105476 / IBS 506), this protein is Ribosomal RNA small subunit methyltransferase G.